A 503-amino-acid chain; its full sequence is Maturase K (503 aa).

It belongs to the intron maturase 2 family. MatK subfamily.

The protein resides in the plastid. It localises to the chloroplast. Usually encoded in the trnK tRNA gene intron. Probably assists in splicing its own and other chloroplast group II introns. The protein is Maturase K of Liquidambar formosana (Formosan gum).